A 497-amino-acid chain; its full sequence is Glycerol kinase (497 aa).

Thr-13 contributes to the ADP binding site. ATP is bound by residues Thr-13, Thr-14, and Ser-15. Position 13 (Thr-13) interacts with sn-glycerol 3-phosphate. An ADP-binding site is contributed by Arg-17. The sn-glycerol 3-phosphate site is built by Arg-83, Glu-84, and Tyr-135. The glycerol site is built by Arg-83, Glu-84, and Tyr-135. His-231 carries the post-translational modification Phosphohistidine; by HPr. A sn-glycerol 3-phosphate-binding site is contributed by Asp-245. Positions 245 and 246 each coordinate glycerol. ADP is bound by residues Thr-267 and Gly-310. 4 residues coordinate ATP: Thr-267, Gly-310, Gln-314, and Gly-411. 2 residues coordinate ADP: Gly-411 and Asn-415.

This sequence belongs to the FGGY kinase family. In terms of assembly, homotetramer and homodimer (in equilibrium). In terms of processing, the phosphoenolpyruvate-dependent sugar phosphotransferase system (PTS), including enzyme I, and histidine-containing protein (HPr) are required for the phosphorylation, which leads to the activation of the enzyme.

It carries out the reaction glycerol + ATP = sn-glycerol 3-phosphate + ADP + H(+). Its pathway is polyol metabolism; glycerol degradation via glycerol kinase pathway; sn-glycerol 3-phosphate from glycerol: step 1/1. With respect to regulation, activated by phosphorylation and inhibited by fructose 1,6-bisphosphate (FBP). Functionally, key enzyme in the regulation of glycerol uptake and metabolism. Catalyzes the phosphorylation of glycerol to yield sn-glycerol 3-phosphate. The protein is Glycerol kinase of Listeria welshimeri serovar 6b (strain ATCC 35897 / DSM 20650 / CCUG 15529 / CIP 8149 / NCTC 11857 / SLCC 5334 / V8).